A 339-amino-acid chain; its full sequence is Glycerol-3-phosphate dehydrogenase [NAD(P)+] (339 aa).

Positions 15, 16, 36, and 110 each coordinate NADPH. The sn-glycerol 3-phosphate site is built by Lys-110, Gly-139, and Thr-141. Ala-143 provides a ligand contact to NADPH. Positions 195, 248, 258, 259, and 260 each coordinate sn-glycerol 3-phosphate. Lys-195 serves as the catalytic Proton acceptor. Position 259 (Arg-259) interacts with NADPH. NADPH is bound by residues Val-283 and Glu-285.

Belongs to the NAD-dependent glycerol-3-phosphate dehydrogenase family.

It localises to the cytoplasm. The catalysed reaction is sn-glycerol 3-phosphate + NAD(+) = dihydroxyacetone phosphate + NADH + H(+). It carries out the reaction sn-glycerol 3-phosphate + NADP(+) = dihydroxyacetone phosphate + NADPH + H(+). It participates in membrane lipid metabolism; glycerophospholipid metabolism. Functionally, catalyzes the reduction of the glycolytic intermediate dihydroxyacetone phosphate (DHAP) to sn-glycerol 3-phosphate (G3P), the key precursor for phospholipid synthesis. The sequence is that of Glycerol-3-phosphate dehydrogenase [NAD(P)+] from Salmonella agona (strain SL483).